A 280-amino-acid polypeptide reads, in one-letter code: Ribose-phosphate pyrophosphokinase (280 aa).

Residues 32–34 and 89–90 contribute to the ATP site; these read DGE and RQ. 2 residues coordinate Mg(2+): His122 and Asp160. Lys183 is an active-site residue. D-ribose 5-phosphate-binding positions include Arg185, Asp209, and 213 to 217; that span reads STGGT.

It belongs to the ribose-phosphate pyrophosphokinase family. Class III (archaeal) subfamily. It depends on Mg(2+) as a cofactor.

It is found in the cytoplasm. The catalysed reaction is D-ribose 5-phosphate + ATP = 5-phospho-alpha-D-ribose 1-diphosphate + AMP + H(+). It participates in metabolic intermediate biosynthesis; 5-phospho-alpha-D-ribose 1-diphosphate biosynthesis; 5-phospho-alpha-D-ribose 1-diphosphate from D-ribose 5-phosphate (route I): step 1/1. With respect to regulation, activated by Co(2+) and Ni(2+) ions, however Mg(2+) ion shows almost no significant effect on the activity. Equally inhibited by ADP, CTP and GTP, while dTTP and UTP are less inhibitory. In terms of biological role, involved in the biosynthesis of the central metabolite phospho-alpha-D-ribosyl-1-pyrophosphate (PRPP) via the transfer of pyrophosphoryl group from ATP to 1-hydroxyl of ribose-5-phosphate (Rib-5-P). It can also use CTP and GTP as substrates in addition to ATP. In Thermococcus kodakarensis (strain ATCC BAA-918 / JCM 12380 / KOD1) (Pyrococcus kodakaraensis (strain KOD1)), this protein is Ribose-phosphate pyrophosphokinase.